A 629-amino-acid chain; its full sequence is tRNA uridine 5-carboxymethylaminomethyl modification enzyme MnmG (629 aa).

13 to 18 lines the FAD pocket; it reads GGGHAG. 273–287 provides a ligand contact to NAD(+); that stretch reads GPRYCPSIEDKITRF.

It belongs to the MnmG family. In terms of assembly, homodimer. Heterotetramer of two MnmE and two MnmG subunits. FAD serves as cofactor.

It localises to the cytoplasm. Functionally, NAD-binding protein involved in the addition of a carboxymethylaminomethyl (cmnm) group at the wobble position (U34) of certain tRNAs, forming tRNA-cmnm(5)s(2)U34. The chain is tRNA uridine 5-carboxymethylaminomethyl modification enzyme MnmG from Aeromonas salmonicida (strain A449).